The following is a 293-amino-acid chain: Lymphocyte antigen 6 complex locus protein G6f (293 aa).

Residues 1–19 form the signal peptide; the sequence is MAMVVFLLLYLCGHPQAAA. The Ig-like V-type domain maps to 20–124; that stretch reads DNIQTLYVPS…HKYQNWRVYD (105 aa). Residues 20 to 237 are Extracellular-facing; sequence DNIQTLYVPS…APLPSWDVSW (218 aa). A disulfide bridge connects residues C37 and C108. An N-linked (GlcNAc...) asparagine glycan is attached at N90. Residues 238–258 traverse the membrane as a helical segment; it reads ILMLLFAAGQGVTIIALSIVI. The Cytoplasmic portion of the chain corresponds to 259–293; the sequence is WRHQRAQGTQDREPSIPHFKPEVQVYENIHLARLR. Position 284 is a phosphotyrosine (Y284).

Homodimer; disulfide-linked. Interacts with GRB2 and GRB7 in a phosphorylation-dependent manner. Post-translationally, N-glycosylated.

It localises to the cell membrane. Functionally, may play a role in the downstream signal transduction pathways involving GRB2 and GRB7. In Rattus norvegicus (Rat), this protein is Lymphocyte antigen 6 complex locus protein G6f (Ly6g6f).